Here is a 317-residue protein sequence, read N- to C-terminus: MAELACFCYPHLENDSYRFIPFNSLAIKCMLTAKVDKKDQDKFYNSIIYGIAPPPQFKKRYNTNDNSRGMNYETPMFNKVAVLICEALNSIKVTQSDVASVLSKVISVRHLENLVLRRENHQDVLFHSKELLLRSVLIAIGHSKEIETTATAEGGEVVFQNAAFTMWKLTYLEHRLMPILDQNFIEYKITVNEDKPISESHVRELIAELRWQYNKFAVITHGKGHYRVVKYSSVANHADRVYATFKSNNKNGNVIEFNLLDQRIIWQNWYAFTSSMKQGNTLEICKKLLFQKMKRESNPFKGLSTDRKMDEVSQIGI.

Residues 107 to 109 (SVR), Lys-188, and 221 to 223 (HGK) contribute to the ATP site. Residues 205–241 (LIAELRWQYNKFAVITHGKGHYRVVKYSSVANHADRV) are RNA-binding. His-225 serves as the catalytic For NTPase and RTPase activities. Arg-227 is an ATP binding site.

The protein belongs to the rotavirus NSP2 family. As to quaternary structure, homooctamer. Interacts with VP1; this interaction is weak. Interacts with NSP5; this interaction leads to up-regulation of NSP5 phosphorylation and formation of viral factories. Interacts with host DCP1A, DCP1B, DDX6, EDC4 and EIF2S1/eIF2-alpha; these interactions are probably part of the sequestration of some host SGs and PBs proteins in viral factories. Mg(2+) is required as a cofactor.

It localises to the host cytoplasm. Functionally, participates in replication and packaging of the viral genome. Plays a crucial role, together with NSP5, in the formation of virus factories (viroplasms), which are large inclusions in the host cytoplasm where replication intermediates are assembled and viral RNA replication takes place. Displays ssRNA binding, NTPase, RNA triphosphatase (RTPase) and ATP-independent helix-unwinding activities. The unwinding activity may prepare and organize plus-strand RNAs for packaging and replication by removing interfering secondary structures. The RTPase activity plays a role in the removal of the gamma-phosphate from the rotavirus RNA minus strands of dsRNA genome segments. Participates in the selective exclusion of host proteins from stress granules (SG) and P bodies (PB). Also participates in the sequestration of these remodeled organelles in viral factories. The sequence is that of Non-structural protein 2 from Bos taurus (Bovine).